The chain runs to 129 residues: Small ribosomal subunit protein uS11 (129 aa).

Belongs to the universal ribosomal protein uS11 family. As to quaternary structure, part of the 30S ribosomal subunit. Interacts with proteins S7 and S18. Binds to IF-3.

Functionally, located on the platform of the 30S subunit, it bridges several disparate RNA helices of the 16S rRNA. Forms part of the Shine-Dalgarno cleft in the 70S ribosome. The chain is Small ribosomal subunit protein uS11 from Zymomonas mobilis subsp. mobilis (strain ATCC 31821 / ZM4 / CP4).